The chain runs to 421 residues: Replication-associated recombination protein A (421 aa).

45–52 provides a ligand contact to ATP; that stretch reads GPPGIGKT.

Belongs to the AAA ATPase family. RarA/MGS1/WRNIP1 subfamily. In terms of assembly, homotetramer. Interacts with single-stranded binding protein SsbA. May interact with PriA.

The protein resides in the cytoplasm. It is found in the nucleoid. Its activity is regulated as follows. ssDNA-dependent ATP hydrolysis is stimulated by single-stranded binding protein SsbA but not by SsbB; in the presence of SsbB, ssDNA secondary structure is removed and RarA's ATPase activity is decreased. The C-terminal 9 residues of SsbA are sufficient to stimulate ATPase activity. Its function is as follows. Plays a role in recombination-dependent DNA replication. Positively affects the formation of RecA threads during response to DNA damage, directly or indirectly counteracting the negative RecA modulators RecX and RecU. Stabilizes a RecA-ssDNA complex. In vitro, in the presence of SsbA, inhibits PriA-dependent DNA replication restart of both leading and lagging strands; elongation is insensitive to RarA. Plays a role in response to DNA damage, localizes to the replication fork but also to DNA elsewhere in the cell. Probably required for repair of single-stranded nicks generated by H(2)O(2). Epistatic to RecA, partially represses deletions of the error-prone translesion DNA polymerases (dinB1 and dinB2), genetically interacts with replicative helicase loaders dnaB and dnaD. Epistatic to recF and recO mutations upon DNA damage. A DNA-dependent ATPase stimulated by hairpin structures in circular single-stranded (ss)DNA or ssDNA-dsDNA junctions, by blunt end and 5'-tailed dsDNA and by single-stranded binding protein SsbA protein bound to ssDNA. Preferentially binds ssDNA and replication-fork structures; SsbA stimulates binding to ssDNA. Addition of ATP to the protein has no visible effect in vitro. This chain is Replication-associated recombination protein A, found in Bacillus subtilis (strain 168).